A 354-amino-acid polypeptide reads, in one-letter code: Rhodopsin (354 aa).

Over 1 to 36 (MNGTEGPDFYVPMVNTTGIVRSPYDYPQYYLVNPAA) the chain is Extracellular. Residues Asn-2 and Asn-15 are each glycosylated (N-linked (GlcNAc...) asparagine). The helical transmembrane segment at 37–61 (FSMLAAYMFFLILVGFPVNFLTLYV) threads the bilayer. The Cytoplasmic segment spans residues 62–73 (TMEHKKLRTPLN). Residues 74-96 (YILLNLAVANLFMVIGGFTTTMY) traverse the membrane as a helical segment. Residues 97–110 (TSMHGYFVLGRTGC) are Extracellular-facing. A disulfide bond links Cys-110 and Cys-187. Residues 111 to 133 (NLEGFFATLGGEIALWSLVVLAV) form a helical membrane-spanning segment. The 'Ionic lock' involved in activated form stabilization motif lies at 134 to 136 (ERW). The Cytoplasmic segment spans residues 134 to 152 (ERWVVVCKPISNFRFGENH). Residues 153-173 (AVMGVSFTWLMACACSVPPLF) form a helical membrane-spanning segment. The Extracellular portion of the chain corresponds to 174–202 (GWSRYIPEGMQCSCGIDYYTRAPGYNNES). A helical transmembrane segment spans residues 203 to 224 (FVIYMFVCHFSIPLTIIFFCYG). Residues 225–252 (RLLCAVKDAAAAQQESETTQRAEREVSR) lie on the Cytoplasmic side of the membrane. Residues 253 to 274 (MVVIMVIGFLICWLPYASVAWF) form a helical membrane-spanning segment. Topologically, residues 275-286 (IFTHQGSEFGPV) are extracellular. A helical membrane pass occupies residues 287–308 (FMTIPAFFAKSSAIYNPMIYIC). Position 296 is an N6-(retinylidene)lysine (Lys-296). Residues 309-354 (MNKQFRHCMITTLCCGKNPFEEEEGASTTASKTEASSVSSSHVSPA) are Cytoplasmic-facing. Residues Cys-322 and Cys-323 are each lipidated (S-palmitoyl cysteine). The disordered stretch occupies residues 333-354 (GASTTASKTEASSVSSSHVSPA). A compositionally biased stretch (low complexity) spans 334–354 (ASTTASKTEASSVSSSHVSPA).

It belongs to the G-protein coupled receptor 1 family. Opsin subfamily. In terms of processing, phosphorylated on some or all of the serine and threonine residues present in the C-terminal region. Contains one covalently linked retinal chromophore.

The protein resides in the membrane. It is found in the cell projection. Its subcellular location is the cilium. It localises to the photoreceptor outer segment. Functionally, photoreceptor required for image-forming vision at low light intensity. While most salt water fish species use retinal as chromophore, most freshwater fish use 3-dehydroretinal, or a mixture of retinal and 3-dehydroretinal. Light-induced isomerization of 11-cis to all-trans retinal triggers a conformational change that activates signaling via G-proteins. Subsequent receptor phosphorylation mediates displacement of the bound G-protein alpha subunit by arrestin and terminates signaling. The chain is Rhodopsin (rho) from Zeus faber (John Dory).